Here is a 750-residue protein sequence, read N- to C-terminus: Probable methylmalonyl-CoA mutase large subunit (750 aa).

Positions 91, 94, 101, 103, 105, and 130 each coordinate (R)-methylmalonyl-CoA. Residues Phe133 and Ala155 each coordinate cob(II)alamin. (R)-methylmalonyl-CoA-binding residues include Thr211 and Gln213. Positions 222 and 223 each coordinate cob(II)alamin. (R)-methylmalonyl-CoA is bound by residues Arg223, His260, Arg299, and Ser301. Cob(II)alamin contacts are provided by Gly349, Glu386, Ala389, Gly628, His629, Asp630, Arg631, Ser674, Leu676, Gly705, and Thr728. The B12-binding domain maps to 616–748; the sequence is RPRILIAKMG…HRLAERLGYT (133 aa).

The protein belongs to the methylmalonyl-CoA mutase family. In terms of assembly, heterodimer of an alpha and a beta chain. The cofactor is adenosylcob(III)alamin.

The enzyme catalyses (R)-methylmalonyl-CoA = succinyl-CoA. It participates in metabolic intermediate metabolism; propanoyl-CoA degradation; succinyl-CoA from propanoyl-CoA: step 3/3. Its function is as follows. Catalyzes the isomerization of succinyl-CoA to methylmalonyl-CoA during synthesis of propionate from tricarboxylic acid-cycle intermediates. The polypeptide is Probable methylmalonyl-CoA mutase large subunit (mutB) (Mycobacterium bovis (strain ATCC BAA-935 / AF2122/97)).